The sequence spans 1384 residues: DNA-directed RNA polymerase subunit beta' (1384 aa).

The Zn(2+) site is built by Cys81, Cys83, Cys96, and Cys99. The Mg(2+) site is built by Asp472, Asp474, and Asp476.

It belongs to the RNA polymerase beta' chain family. In terms of assembly, the RNAP catalytic core consists of 2 alpha, 1 beta, 1 beta' and 1 omega subunit. When a sigma factor is associated with the core the holoenzyme is formed, which can initiate transcription. It depends on Mg(2+) as a cofactor. The cofactor is Zn(2+).

It catalyses the reaction RNA(n) + a ribonucleoside 5'-triphosphate = RNA(n+1) + diphosphate. Functionally, DNA-dependent RNA polymerase catalyzes the transcription of DNA into RNA using the four ribonucleoside triphosphates as substrates. The chain is DNA-directed RNA polymerase subunit beta' from Opitutus terrae (strain DSM 11246 / JCM 15787 / PB90-1).